A 105-amino-acid polypeptide reads, in one-letter code: Putative membrane protein insertion efficiency factor (105 aa).

This sequence belongs to the UPF0161 family.

The protein localises to the cell membrane. Functionally, could be involved in insertion of integral membrane proteins into the membrane. In Bifidobacterium longum subsp. infantis (strain ATCC 15697 / DSM 20088 / JCM 1222 / NCTC 11817 / S12), this protein is Putative membrane protein insertion efficiency factor.